The chain runs to 392 residues: Multidrug resistance protein MdtL (392 aa).

12 consecutive transmembrane segments (helical) span residues 4–24 (FLLC…MYLV), 38–58 (AQLH…MLFA), 70–90 (VAIV…QAHA), 95–115 (LVGR…AFAI), 131–151 (LLNG…HLIM), 158–178 (SLFY…VFIL), 209–229 (ILIT…SPVL), 246–266 (ALMA…LSLF), 270–290 (TLML…SLAT), 294–314 (LTLI…GVAM), 331–351 (VLGI…AIIG), and 357–377 (MLIG…LVVT).

Belongs to the major facilitator superfamily. DHA1 family. MdtL (TC 2.A.1.2.22) subfamily.

Its subcellular location is the cell inner membrane. In Klebsiella pneumoniae (strain 342), this protein is Multidrug resistance protein MdtL.